Consider the following 296-residue polypeptide: Testis-expressed protein 26 (296 aa).

5 mn regions span residues 30–42, 69–83, 140–153, 175–189, and 229–243; these read ATTM…PKRG, ESQY…LRSK, ISCT…LTQS, DTEF…AQIP, and QTTY…CLDF.

The polypeptide is Testis-expressed protein 26 (Tex26) (Mus musculus (Mouse)).